We begin with the raw amino-acid sequence, 288 residues long: Transposase InsF for insertion sequence IS3fB (288 aa).

Residues 124 to 287 form the Integrase catalytic domain; it reads YASGPNQKWA…SPEQFENQNL (164 aa).

This sequence belongs to the transposase IS3/IS150/IS904 family.

Involved in the transposition of the insertion sequence IS3. This chain is Transposase InsF for insertion sequence IS3fB (insF7), found in Escherichia coli (strain K12).